A 35-amino-acid polypeptide reads, in one-letter code: Beta-amanitin proprotein (35 aa).

The propeptide occupies 1 to 10 (MSDINATRLP). Positions 11 to 18 (IWGIGCDP) form a cross-link, cyclopeptide (Ile-Pro). The 2'-cysteinyl-6'-hydroxytryptophan sulfoxide (Trp-Cys) cross-link spans 12–16 (WGIGC). A propeptide spanning residues 19-35 (CVGDDVTALLTRGEALC) is cleaved from the precursor.

Belongs to the MSDIN fungal toxin family. Processed by the macrocyclase-peptidase enzyme POPB to yield a toxic cyclic octapeptide. POPB first removes 10 residues from the N-terminus. Conformational trapping of the remaining peptide forces the enzyme to release this intermediate rather than proceed to macrocyclization. The enzyme rebinds the remaining peptide in a different conformation and catalyzes macrocyclization of the N-terminal 8 residues. In terms of tissue distribution, expressed in basidiocarps.

Its function is as follows. Toxin belonging to the bicyclic octapeptides amatoxins that acts by binding non-competitively to RNA polymerase II and greatly slowing the elongation of transcripts from target promoters. This is Beta-amanitin proprotein from Amanita exitialis (Guangzhou destroying angel).